The sequence spans 206 residues: Small ribosomal subunit protein uS4 (206 aa).

Positions 94–157 (RRLDNVVYRL…RRRTYFKNLI (64 aa)) constitute an S4 RNA-binding domain.

It belongs to the universal ribosomal protein uS4 family. Part of the 30S ribosomal subunit. Contacts protein S5. The interaction surface between S4 and S5 is involved in control of translational fidelity.

One of the primary rRNA binding proteins, it binds directly to 16S rRNA where it nucleates assembly of the body of the 30S subunit. In terms of biological role, with S5 and S12 plays an important role in translational accuracy. This chain is Small ribosomal subunit protein uS4, found in Roseiflexus sp. (strain RS-1).